The sequence spans 235 residues: Ubiquinone biosynthesis O-methyltransferase (235 aa).

Residues R39, G59, D80, and M124 each contribute to the S-adenosyl-L-methionine site.

It belongs to the methyltransferase superfamily. UbiG/COQ3 family.

It catalyses the reaction a 3-demethylubiquinol + S-adenosyl-L-methionine = a ubiquinol + S-adenosyl-L-homocysteine + H(+). The enzyme catalyses a 3-(all-trans-polyprenyl)benzene-1,2-diol + S-adenosyl-L-methionine = a 2-methoxy-6-(all-trans-polyprenyl)phenol + S-adenosyl-L-homocysteine + H(+). It participates in cofactor biosynthesis; ubiquinone biosynthesis. O-methyltransferase that catalyzes the 2 O-methylation steps in the ubiquinone biosynthetic pathway. The chain is Ubiquinone biosynthesis O-methyltransferase from Photobacterium profundum (strain SS9).